A 580-amino-acid chain; its full sequence is Phosphomethylpyrimidine synthase (580 aa).

The tract at residues 1 to 58 is disordered; that stretch reads MTPTQNEIHPKHSYSPIRKHGLEVPETEIALDDSPSGPNEPFRIYRTRGPETDPTLGL. Substrate-binding positions include Asn180, Met209, Tyr238, His274, 294-296, 335-338, and Glu374; these read SRG and DGLR. Zn(2+) is bound at residue His378. Residue Tyr401 coordinates substrate. His442 provides a ligand contact to Zn(2+). 3 residues coordinate [4Fe-4S] cluster: Cys522, Cys525, and Cys530. The segment at 554–580 is disordered; sequence VGASDSTEGMKEKSREFVAGGGEVYRE.

The protein belongs to the ThiC family. It depends on [4Fe-4S] cluster as a cofactor.

It catalyses the reaction 5-amino-1-(5-phospho-beta-D-ribosyl)imidazole + S-adenosyl-L-methionine = 4-amino-2-methyl-5-(phosphooxymethyl)pyrimidine + CO + 5'-deoxyadenosine + formate + L-methionine + 3 H(+). Its pathway is cofactor biosynthesis; thiamine diphosphate biosynthesis. Its function is as follows. Catalyzes the synthesis of the hydroxymethylpyrimidine phosphate (HMP-P) moiety of thiamine from aminoimidazole ribotide (AIR) in a radical S-adenosyl-L-methionine (SAM)-dependent reaction. The polypeptide is Phosphomethylpyrimidine synthase (Corynebacterium efficiens (strain DSM 44549 / YS-314 / AJ 12310 / JCM 11189 / NBRC 100395)).